We begin with the raw amino-acid sequence, 951 residues long: Serine/threonine-protein kinase ATG1 (951 aa).

The Protein kinase domain maps to 22-327 (FTINEEIGKG…FPEYFAHPVV (306 aa)). ATP-binding positions include 28-36 (IGKGSFATV) and lysine 51. Aspartate 165 functions as the Proton acceptor in the catalytic mechanism. Disordered stretches follow at residues 343–375 (IITP…PVET), 387–458 (EQAP…YDEQ), 514–573 (HIPK…SSPS), and 924–951 (HQSM…TPPH). 2 stretches are compositionally biased toward basic and acidic residues: residues 359–368 (SLRERQRENP) and 432–442 (PRQRDRTERHY). Polar residues-rich tracts occupy residues 547–573 (AQGN…SSPS) and 939–951 (GGTT…TPPH).

The protein belongs to the protein kinase superfamily. Ser/Thr protein kinase family. APG1/unc-51/ULK1 subfamily. In terms of assembly, homodimer. Forms a ternary complex with ATG13 and ATG17.

It is found in the cytoplasm. Its subcellular location is the preautophagosomal structure membrane. The catalysed reaction is L-seryl-[protein] + ATP = O-phospho-L-seryl-[protein] + ADP + H(+). It carries out the reaction L-threonyl-[protein] + ATP = O-phospho-L-threonyl-[protein] + ADP + H(+). Functionally, serine/threonine protein kinase involved in the cytoplasm to vacuole transport (Cvt) and found to be essential in autophagy, where it is required for the formation of autophagosomes. Involved in the clearance of protein aggregates which cannot be efficiently cleared by the proteasome. Required for selective autophagic degradation of the nucleus (nucleophagy) as well as for mitophagy which contributes to regulate mitochondrial quantity and quality by eliminating the mitochondria to a basal level to fulfill cellular energy requirements and preventing excess ROS production. Also involved in endoplasmic reticulum-specific autophagic process, in selective removal of ER-associated degradation (ERAD) substrates. Plays a key role in ATG9 and ATG23 cycling through the pre-autophagosomal structure and is necessary to promote ATG18 binding to ATG9 through phosphorylation of ATG9. Catalyzes phosphorylation of ATG4, decreasing the interaction between ATG4 and ATG8 and impairing deconjugation of PE-conjugated forms of ATG8. This Sclerotinia sclerotiorum (strain ATCC 18683 / 1980 / Ss-1) (White mold) protein is Serine/threonine-protein kinase ATG1.